The chain runs to 65 residues: uncharacterized protein (65 aa).

Residues 1-16 (MMHVCSLLVSFDVVKS) form the signal peptide.

This is an uncharacterized protein from Saccharomyces cerevisiae (strain ATCC 204508 / S288c) (Baker's yeast).